Consider the following 143-residue polypeptide: Large ribosomal subunit protein uL16 (143 aa).

Over residues 1–14 the composition is skewed to basic residues; it reads MLTPKRVKWRRQHR. Positions 1 to 23 are disordered; sequence MLTPKRVKWRRQHRPDRAGKAKG.

Belongs to the universal ribosomal protein uL16 family. As to quaternary structure, part of the 50S ribosomal subunit.

Its function is as follows. Binds 23S rRNA and is also seen to make contacts with the A and possibly P site tRNAs. This chain is Large ribosomal subunit protein uL16, found in Desulforudis audaxviator (strain MP104C).